Reading from the N-terminus, the 349-residue chain is Increased DNA methylation 2 (349 aa).

The disordered stretch occupies residues 210–230; the sequence is EDNAGTCTSGEESDVAAKPEV. In terms of domain architecture, sHSP spans 233 to 349; it reads EAHGGLMVGL…VMKNLQKQTV (117 aa).

Belongs to the small heat shock protein (HSP20) family. As to quaternary structure, homodimer or oligomer. May form an 16-mer complex. Interacts with MBD7 (via C-terminus). Interacts with IDM1 (via N-terminus). Interacts with IMD3. Part of a complex made of MBD7, IDM1, IDM2, IDM3 and ROS1. In terms of tissue distribution, expressed in cotyledons and hypocotyls in young seedlings.

It is found in the nucleus. The protein resides in the nucleoplasm. In terms of biological role, prevents DNA hypermethylation and transcriptional silencing of transgenes and of some endogenous genes. May act as a molecular chaperone of IDM1, regulating its H3K18 acetylation activity. This chain is Increased DNA methylation 2, found in Arabidopsis thaliana (Mouse-ear cress).